The chain runs to 908 residues: Structural core protein VP2 (908 aa).

The span at 1-19 (MANPQNRVQTERQQNNSSP) shows a compositional bias: polar residues. The segment at 1-25 (MANPQNRVQTERQQNNSSPYLRGDE) is disordered.

This sequence belongs to the orbivirus VP3 family.

The protein localises to the virion. This is Structural core protein VP2 (Segment-2) from Ixodes (gulls).